Consider the following 437-residue polypeptide: tRNA-queuosine alpha-mannosyltransferase (437 aa).

It belongs to the glycosyltransferase group 1 family. Glycosyltransferase 4 subfamily.

It is found in the cytoplasm. Its subcellular location is the nucleus. The catalysed reaction is queuosine(34) in tRNA(Asp) + GDP-alpha-D-mannose = O-4''-alpha-D-mannosylqueuosine(34) in tRNA(Asp) + GDP + H(+). Functionally, glycosyltransferase that specifically catalyzes mannosylation of cytoplasmic tRNA(Asp) modified with queuosine at position 34 (queuosine(34)). Mannosylates the cyclopentene moiety of queuosine(34) in tRNA(Asp) to form mannosyl-queuosine(34). Mannosylation of queuosine(34) in tRNA(Asp) is required to slow-down elongation at cognate codons, GAC and GAU, thereby regulating protein translation. The sequence is that of tRNA-queuosine alpha-mannosyltransferase (gtdc1) from Xenopus laevis (African clawed frog).